A 174-amino-acid polypeptide reads, in one-letter code: Adenylate kinase (174 aa).

Positions 12–41 (STGDMLRAAIKAGTPLGLEAKKIIDEGGLV) are NMP. AMP contacts are provided by residues threonine 13, arginine 18, 39-41 (GLV), 67-70 (GFPR), and glutamine 74. Residues 104-141 (GRRVHLASGRTYHVTYNPPKVEGKDDVTGEDLIQRDDD) are LID. ATP-binding positions include arginine 105 and 114–115 (TY). AMP-binding residues include arginine 138 and arginine 149.

Belongs to the adenylate kinase family. Monomer.

The protein localises to the cytoplasm. It carries out the reaction AMP + ATP = 2 ADP. The protein operates within purine metabolism; AMP biosynthesis via salvage pathway; AMP from ADP: step 1/1. Its function is as follows. Catalyzes the reversible transfer of the terminal phosphate group between ATP and AMP. Plays an important role in cellular energy homeostasis and in adenine nucleotide metabolism. This chain is Adenylate kinase, found in Neisseria cinerea.